The following is a 184-amino-acid chain: UPF0669 protein C6orf120 homolog (184 aa).

A signal peptide spans 1–23 (MAAPWTGALLLLLASQAVSSAQA). N-linked (GlcNAc...) asparagine glycosylation is present at Asn47.

This sequence belongs to the UPF0669 family.

Its subcellular location is the secreted. Functionally, may be involved in induction of apoptosis in CD4(+) T-cells, but not CD8(+) T-cells or hepatocytes. The sequence is that of UPF0669 protein C6orf120 homolog from Bos taurus (Bovine).